The sequence spans 351 residues: Pentatricopeptide repeat-containing protein At2g40240, mitochondrial (351 aa).

A mitochondrion-targeting transit peptide spans 1–27; sequence MSLLRRRFVKQSVNCITFLQILAERSF. PPR repeat units lie at residues 106-140, 141-175, 176-210, 211-245, 246-280, and 281-315; these read RKNA…RLGL, TPST…SVSM, DVTA…GNSP, DSRS…GVTV, LYST…DLRL, and DSES…GLRM.

This sequence belongs to the PPR family. P subfamily.

The protein resides in the mitochondrion. The protein is Pentatricopeptide repeat-containing protein At2g40240, mitochondrial of Arabidopsis thaliana (Mouse-ear cress).